The chain runs to 340 residues: Protein jhp_1168 (340 aa).

As to quaternary structure, seems to interact with H.pylori HolB.

Could be the functional equivalent of DNA polymerase III delta subunit (HolA). The protein is Protein jhp_1168 of Helicobacter pylori (strain J99 / ATCC 700824) (Campylobacter pylori J99).